We begin with the raw amino-acid sequence, 441 residues long: Signal recognition particle 54 kDa protein (441 aa).

GTP is bound by residues 103 to 110, 184 to 188, and 244 to 247; these read GVQGSGKT, DTAGR, and TKMD.

The protein belongs to the GTP-binding SRP family. SRP54 subfamily. In terms of assembly, part of the signal recognition particle protein translocation system, which is composed of SRP and FtsY. Archaeal SRP consists of a 7S RNA molecule of 300 nucleotides and two protein subunits: SRP54 and SRP19.

The protein localises to the cytoplasm. The catalysed reaction is GTP + H2O = GDP + phosphate + H(+). In terms of biological role, involved in targeting and insertion of nascent membrane proteins into the cytoplasmic membrane. Binds to the hydrophobic signal sequence of the ribosome-nascent chain (RNC) as it emerges from the ribosomes. The SRP-RNC complex is then targeted to the cytoplasmic membrane where it interacts with the SRP receptor FtsY. In Aeropyrum pernix (strain ATCC 700893 / DSM 11879 / JCM 9820 / NBRC 100138 / K1), this protein is Signal recognition particle 54 kDa protein.